A 360-amino-acid polypeptide reads, in one-letter code: Protein phosphatase 1 regulatory subunit 7 (360 aa).

Residues 1 to 64 are disordered; sequence MAAERGAGQQ…GEEDPEEEHE (64 aa). An N-acetylalanine modification is found at A2. 5 positions are modified to phosphoserine: S12, S24, S27, S44, and S47. The span at 17–34 shows a compositional bias: basic and acidic residues; that stretch reads EVDRRVESEESGDEEGKK. Over residues 53-63 the composition is skewed to acidic residues; it reads ERGEEDPEEEH. LRR repeat units lie at residues 77-98, 99-120, 121-142, 143-164, 165-186, 187-208, 209-230, 231-252, 253-274, 275-296, and 297-318; these read DAED…EVLK, KVKT…EELQ, SLRE…EALT, ELEI…DKVT, QLKK…SNLH, QLQM…DTLT, NLES…DALT, NLTV…QNLV, NLQE…ENNN, KLTM…SHLT, and EPQE…DELK. S322 carries the phosphoserine modification. In terms of domain architecture, LRRCT spans 331-360; the sequence is NPLQKDPQYRRKVMLALPSVRQIDATFVRF.

This sequence belongs to the SDS22 family. As to quaternary structure, interacts with PPP1CA, PPP1CB and PPP1CC/PPP1G.

It localises to the nucleus. Functionally, regulatory subunit of protein phosphatase 1. This is Protein phosphatase 1 regulatory subunit 7 (PPP1R7) from Pongo abelii (Sumatran orangutan).